We begin with the raw amino-acid sequence, 136 residues long: Cytochrome c oxidase subunit 13, mitochondrial (136 aa).

The N-terminal 29 residues, 1-29, are a transit peptide targeting the mitochondrion; sequence MFAQRQMFFARLAANLRAPAVRQTVQRRF. Residues 30 to 62 lie on the Mitochondrial matrix side of the membrane; sequence ASTPANESGKNAFVREREAVKQHAAETTELWRK. Residues 63 to 83 form a helical membrane-spanning segment; it reads ISLYGIPPALALAGYNAYTLY. At 84–136 the chain is on the mitochondrial intermembrane side; it reads NEHWEHWSHLPPLEERTEYPYQNIRTRNYPWGDGDKTLFWNESVNYHNRDKVT.

It belongs to the cytochrome c oxidase subunit 6A family. In terms of assembly, component of the cytochrome c oxidase (complex IV, CIV), a multisubunit enzyme composed of 11 subunits. The complex is composed of a catalytic core of 3 subunits Cox1, Cox2 and Cox3, encoded in the mitochondrial DNA, and 8 supernumerary subunits Cox4, Cox5a/Cox5, Cox6, Cox7, Cox8, Cox7a/Cox9, Cox6b/Cox12 and Cox6a/Cox13, which are encoded in the nuclear genome. The complex exists as a monomer or a dimer and forms respiratory supercomplexes (SCs) in the inner mitochondrial membrane with NADH-ubiquinone oxidoreductase (complex I, CI) and ubiquinol-cytochrome c oxidoreductase (cytochrome b-c1 complex, complex III, CIII), resulting in various different assemblies (supercomplexes I(1)IV(1), I(1)III(3)IV(2), III(2)IV(1) and III(2)IV(2) as well as larger supercomplexes of compositions like I(1)III(2)IV(5-6)). Cox6a/Cox13 was not present in the cryo-EM structure. It may be involved in complex IV dimer formation and might not be always expressed. This would explain its absence in the map of the isolated monomer.

The protein localises to the mitochondrion inner membrane. The protein operates within energy metabolism; oxidative phosphorylation. Functionally, component of the cytochrome c oxidase, the last enzyme in the mitochondrial electron transport chain which drives oxidative phosphorylation. The respiratory chain contains 3 multisubunit complexes succinate dehydrogenase (complex II, CII), ubiquinol-cytochrome c oxidoreductase (cytochrome b-c1 complex, complex III, CIII) and cytochrome c oxidase (complex IV, CIV), that cooperate to transfer electrons derived from NADH and succinate to molecular oxygen, creating an electrochemical gradient over the inner membrane that drives transmembrane transport and the ATP synthase. Cytochrome c oxidase is the component of the respiratory chain that catalyzes the reduction of oxygen to water. Electrons originating from reduced cytochrome c in the intermembrane space (IMS) are transferred via the dinuclear copper A center (CU(A)) of Cox2 and heme A of Cox1 to the active site in Cox1, a binuclear center (BNC) formed by heme A3 and copper B (CU(B)). The BNC reduces molecular oxygen to 2 water molecules using 4 electrons from cytochrome c in the IMS and 4 protons from the mitochondrial matrix. The chain is Cytochrome c oxidase subunit 13, mitochondrial (eat-5) from Neurospora crassa (strain ATCC 24698 / 74-OR23-1A / CBS 708.71 / DSM 1257 / FGSC 987).